The sequence spans 132 residues: MKGLGSNIVRSLPNGARLVCADNTGAKELEVIAVKNYVGTVRRLPAGGVGHMVFVSVKKGTPEMRKQVLPAIIIRQKKEYRRADGTRVKFEDNAAVIVTPEGTPKGSEIKGPVSKEAAERWPGVSRLAKIIH.

The protein belongs to the universal ribosomal protein uL14 family. Part of the 50S ribosomal subunit. Forms a cluster with proteins L3 and L24e, part of which may contact the 16S rRNA in 2 intersubunit bridges.

Functionally, binds to 23S rRNA. Forms part of two intersubunit bridges in the 70S ribosome. This is Large ribosomal subunit protein uL14 from Methanococcus maripaludis (strain DSM 14266 / JCM 13030 / NBRC 101832 / S2 / LL).